Consider the following 189-residue polypeptide: Large ribosomal subunit protein bL9 (189 aa).

The protein belongs to the bacterial ribosomal protein bL9 family.

In terms of biological role, binds to the 23S rRNA. This chain is Large ribosomal subunit protein bL9, found in Cereibacter sphaeroides (strain KD131 / KCTC 12085) (Rhodobacter sphaeroides).